The following is a 541-amino-acid chain: T-complex protein 1 subunit epsilon (541 aa).

N-acetylalanine is present on alanine 2. Residue lysine 20 forms a Glycyl lysine isopeptide (Lys-Gly) (interchain with G-Cter in SUMO2) linkage. Serine 26 is subject to Phosphoserine. Position 53 (glycine 53) interacts with ADP. Position 53 (glycine 53) interacts with ATP. Aspartate 104 contributes to the Mg(2+) binding site. Positions 105, 106, 107, and 175 each coordinate ADP. ATP-binding residues include threonine 106 and threonine 107. Glycyl lysine isopeptide (Lys-Gly) (interchain with G-Cter in SUMO2) cross-links involve residues lysine 210, lysine 214, lysine 265, lysine 275, and lysine 279. At serine 346 the chain carries Phosphoserine. Lysine 392 is covalently cross-linked (Glycyl lysine isopeptide (Lys-Gly) (interchain with G-Cter in SUMO2)). ADP-binding residues include glycine 422, aspartate 492, glutamate 508, and lysine 513. Glycine 422 is a binding site for ATP. A Phosphoserine modification is found at serine 539.

It belongs to the TCP-1 chaperonin family. Component of the chaperonin-containing T-complex (TRiC), a hexadecamer composed of two identical back-to-back stacked rings enclosing a protein folding chamber. Each ring is made up of eight different subunits: TCP1/CCT1, CCT2, CCT3, CCT4, CCT5, CCT6A/CCT6, CCT7, CCT8. Interacts with PACRG. Interacts with DNAAF4. Interacts with DLEC1. Interacts with SPMAP2. Ubiquitinated by the DCX(DCAF12) complex specifically recognizes the diglutamate (Glu-Glu) at the C-terminus, leading to its degradation.

The protein localises to the cytoplasm. The protein resides in the cytoskeleton. It localises to the microtubule organizing center. It is found in the centrosome. It catalyses the reaction ATP + H2O = ADP + phosphate + H(+). Component of the chaperonin-containing T-complex (TRiC), a molecular chaperone complex that assists the folding of actin, tubulin and other proteins upon ATP hydrolysis. The TRiC complex mediates the folding of WRAP53/TCAB1, thereby regulating telomere maintenance. As part of the TRiC complex may play a role in the assembly of BBSome, a complex involved in ciliogenesis regulating transports vesicles to the cilia. This is T-complex protein 1 subunit epsilon (CCT5) from Homo sapiens (Human).